The primary structure comprises 511 residues: Bifunctional purine biosynthesis protein PurH (511 aa).

The 146-residue stretch at 1 to 146 (MTKRALVSVS…KNHADVTVVV (146 aa)) folds into the MGS-like domain.

Belongs to the PurH family.

It catalyses the reaction (6R)-10-formyltetrahydrofolate + 5-amino-1-(5-phospho-beta-D-ribosyl)imidazole-4-carboxamide = 5-formamido-1-(5-phospho-D-ribosyl)imidazole-4-carboxamide + (6S)-5,6,7,8-tetrahydrofolate. The catalysed reaction is IMP + H2O = 5-formamido-1-(5-phospho-D-ribosyl)imidazole-4-carboxamide. It participates in purine metabolism; IMP biosynthesis via de novo pathway; 5-formamido-1-(5-phospho-D-ribosyl)imidazole-4-carboxamide from 5-amino-1-(5-phospho-D-ribosyl)imidazole-4-carboxamide (10-formyl THF route): step 1/1. Its pathway is purine metabolism; IMP biosynthesis via de novo pathway; IMP from 5-formamido-1-(5-phospho-D-ribosyl)imidazole-4-carboxamide: step 1/1. The chain is Bifunctional purine biosynthesis protein PurH from Shouchella clausii (strain KSM-K16) (Alkalihalobacillus clausii).